An 87-amino-acid polypeptide reads, in one-letter code: MAKGQSLQDPFLNALRRERIPVSIFLVNGIKLQGKIQSFDQFVILLENTVNQMVYKHAISTVVPARAVNFQGVQENDDTEEPEAGNI.

One can recognise a Sm domain in the interval 9–68; it reads DPFLNALRRERIPVSIFLVNGIKLQGKIQSFDQFVILLENTVNQMVYKHAISTVVPARAV.

This sequence belongs to the Hfq family. Homohexamer.

Its function is as follows. RNA chaperone that binds small regulatory RNA (sRNAs) and mRNAs to facilitate mRNA translational regulation in response to envelope stress, environmental stress and changes in metabolite concentrations. Also binds with high specificity to tRNAs. The chain is RNA-binding protein Hfq from Pseudoalteromonas translucida (strain TAC 125).